The sequence spans 352 residues: Transcription factor MYB51 (352 aa).

HTH myb-type domains lie at 10–62 and 63–117; these read ELGL…ANYL and RPDI…KKRL. DNA-binding regions (H-T-H motif) lie at residues 38-62 and 90-113; these read WRTL…ANYL and WSAI…NTHI. Disordered stretches follow at residues 128-157 and 198-219; these read KGIT…DLDN and GGPL…SVDS. The segment covering 203–219 has biased composition (low complexity); sequence STSHTTNTTTTSVSVDS.

Can form complexes with MYC2, MYC3 or MYC4. Expressed in vegetative parts of the plant, mainly in mature rosette leaves and in trichomes. Detected in roots, but not in mature flowers or siliques.

The protein resides in the nucleus. Transcription factor positively regulating indolic glucosinolate biosynthetic pathway genes. This is Transcription factor MYB51 (MYB51) from Arabidopsis thaliana (Mouse-ear cress).